The chain runs to 357 residues: D-alanine--D-alanine ligase (357 aa).

Residues 145–339 (KEVMLYHGIQ…YGDLVMDIVN (195 aa)) form the ATP-grasp domain. 172–225 (PFDFPVVVKPTSGGSSVGTHIIHNQEELESGLEDVFRFDNSAIVEEFTPGREFS) is an ATP binding site. Mg(2+)-binding residues include aspartate 294, glutamate 306, and asparagine 308.

Belongs to the D-alanine--D-alanine ligase family. The cofactor is Mg(2+). Requires Mn(2+) as cofactor.

It localises to the cytoplasm. It catalyses the reaction 2 D-alanine + ATP = D-alanyl-D-alanine + ADP + phosphate + H(+). It participates in cell wall biogenesis; peptidoglycan biosynthesis. Its function is as follows. Cell wall formation. In Lacticaseibacillus paracasei (strain ATCC 334 / BCRC 17002 / CCUG 31169 / CIP 107868 / KCTC 3260 / NRRL B-441) (Lactobacillus paracasei), this protein is D-alanine--D-alanine ligase.